Consider the following 329-residue polypeptide: Putative methylthioribose-1-phosphate isomerase (329 aa).

Residues arginine 50–alanine 52, arginine 84, and glutamine 182 contribute to the substrate site. Residue aspartate 223 is the Proton donor of the active site. Asparagine 233 to lysine 234 is a substrate binding site.

It belongs to the eIF-2B alpha/beta/delta subunits family. MtnA subfamily.

It catalyses the reaction 5-(methylsulfanyl)-alpha-D-ribose 1-phosphate = 5-(methylsulfanyl)-D-ribulose 1-phosphate. Functionally, catalyzes the interconversion of methylthioribose-1-phosphate (MTR-1-P) into methylthioribulose-1-phosphate (MTRu-1-P). This is Putative methylthioribose-1-phosphate isomerase from Methanocaldococcus jannaschii (strain ATCC 43067 / DSM 2661 / JAL-1 / JCM 10045 / NBRC 100440) (Methanococcus jannaschii).